The chain runs to 306 residues: MVGTTTTDVPPTMGVKIFSAGVAACLADVITFPLDTAKVRQQIQGEFPITSGIRYKGVLGTITTLAKTEGPLKLYSGLPAGLQRQISFASLRIGLYDTVQEFFTSGEETPSLGSKISAGLTTGGVAVFIGQPTEVVKVRLQAQSHLHGLKPRYTGTYNAYRIIATTESLTSLWKGTTPNLLRNVIINCTELVTYDLMKGALVRNEILADDVPCHFVSALIAGFCTTLLSSPVDVVKTRFINSPPGQYASVPNCAMTMFTKEGPTAFFKGFVPSFLRLGSWNVIMFVCFEKLKGELMRSRQTVDCAT.

Residues 1-10 are Mitochondrial intermembrane-facing; that stretch reads MVGTTTTDVP. A helical transmembrane segment spans residues 11 to 32; the sequence is PTMGVKIFSAGVAACLADVITF. Solcar repeat units follow at residues 11–102, 110–200, and 209–294; these read PTMG…VQEF, PSLG…MKGA, and DDVP…LKGE. Residues 33-73 lie on the Mitochondrial matrix side of the membrane; that stretch reads PLDTAKVRQQIQGEFPITSGIRYKGVLGTITTLAKTEGPLK. A fatty acid 16:0-binding site is contributed by Lys-56. The chain crosses the membrane as a helical span at residues 74–96; that stretch reads LYSGLPAGLQRQISFASLRIGLY. The Mitochondrial intermembrane segment spans residues 97 to 115; that stretch reads DTVQEFFTSGEETPSLGSK. The helical transmembrane segment at 116-132 threads the bilayer; that stretch reads ISAGLTTGGVAVFIGQP. The Mitochondrial matrix segment spans residues 133–177; that stretch reads TEVVKVRLQAQSHLHGLKPRYTGTYNAYRIIATTESLTSLWKGTT. The chain crosses the membrane as a helical span at residues 178–194; it reads PNLLRNVIINCTELVTY. The Mitochondrial intermembrane segment spans residues 195–211; that stretch reads DLMKGALVRNEILADDV. Residues 212-231 traverse the membrane as a helical segment; it reads PCHFVSALIAGFCTTLLSSP. Topologically, residues 232 to 265 are mitochondrial matrix; it reads VDVVKTRFINSPPGQYASVPNCAMTMFTKEGPTA. Cysteine sulfenic acid (-SOH) is present on Cys-253. Residues 266-288 form a helical membrane-spanning segment; that stretch reads FFKGFVPSFLRLGSWNVIMFVCF. Residue Lys-268 coordinates fatty acid 16:0. Residues 289 to 306 are Mitochondrial intermembrane-facing; that stretch reads EKLKGELMRSRQTVDCAT.

The protein belongs to the mitochondrial carrier (TC 2.A.29) family. Most probably functions as a monomer. Binds one purine nucleotide per monomer. However, has also been suggested to function as a homodimer or a homotetramer. Tightly associates with cardiolipin in the mitochondrion inner membrane; may stabilize and regulate its activity. In terms of processing, may undergo sulfenylation upon cold exposure. May increase the sensitivity of UCP1 thermogenic function to the activation by noradrenaline probably through structural effects. Post-translationally, may undergo ubiquitin-mediated proteasomal degradation. Brown adipose tissue.

It localises to the mitochondrion inner membrane. The catalysed reaction is H(+)(in) = H(+)(out). Has no constitutive proton transporter activity and has to be activated by long-chain fatty acids/LCFAs. Inhibited by purine nucleotides. Both purine nucleotides and LCFAs bind the cytosolic side of the transporter and directly compete to activate or inhibit it. Activated by noradrenaline and reactive oxygen species. Despite lacking canonical translational encoding for selenocysteine, a small pool of the protein has been observed to selectively incorporate selenocysteine at 'Cys-253'. Selenocysteine-modified protein is highly sensitive to redox modification and may constitute a pool of protein highly sensitive to activation by elevated levels of reactive oxygen species (ROS). Its function is as follows. Mitochondrial protein responsible for thermogenic respiration, a specialized capacity of brown adipose tissue and beige fat that participates in non-shivering adaptive thermogenesis to temperature and diet variations and more generally to the regulation of energy balance. Functions as a long-chain fatty acid/LCFA and proton symporter, simultaneously transporting one LCFA and one proton through the inner mitochondrial membrane. However, LCFAs remaining associated with the transporter via their hydrophobic tails, it results in an apparent transport of protons activated by LCFAs. Thereby, dissipates the mitochondrial proton gradient and converts the energy of substrate oxydation into heat instead of ATP. Regulates the production of reactive oxygen species/ROS by mitochondria. This Oryctolagus cuniculus (Rabbit) protein is Mitochondrial brown fat uncoupling protein 1.